The chain runs to 184 residues: Small ribosomal subunit protein eS8 (184 aa).

The disordered stretch occupies residues 1 to 23; sequence MGISRDSRHKRRLTGGRYPVHKK. Residues 7–23 show a composition bias toward basic residues; sequence SRHKRRLTGGRYPVHKK.

This sequence belongs to the eukaryotic ribosomal protein eS8 family.

In Theileria annulata, this protein is Small ribosomal subunit protein eS8 (RPS8).